The chain runs to 485 residues: 1-aminocyclopropane-1-carboxylate synthase 2 (485 aa).

Positions 55 and 92 each coordinate substrate. Lys278 bears the N6-(pyridoxal phosphate)lysine mark. Ser460 is subject to Phosphoserine.

It belongs to the class-I pyridoxal-phosphate-dependent aminotransferase family. Homodimer and heterodimer. In vivo, the relevance of heterodimerization with other ACS enzymes is however unsure. Requires pyridoxal 5'-phosphate as cofactor. In terms of processing, phosphorylated on Ser 460; phosphorylation may regulate its turnover. May be processed at its C-terminus.

It catalyses the reaction S-adenosyl-L-methionine = 1-aminocyclopropane-1-carboxylate + S-methyl-5'-thioadenosine + H(+). It participates in alkene biosynthesis; ethylene biosynthesis via S-adenosyl-L-methionine; ethylene from S-adenosyl-L-methionine: step 1/2. In terms of biological role, 1-aminocyclopropane-1-carboxylate synthase (ACS) enzymes catalyze the conversion of S-adenosyl-L-methionine (SAM) into 1-aminocyclopropane-1-carboxylate (ACC), a direct precursor of ethylene. The sequence is that of 1-aminocyclopropane-1-carboxylate synthase 2 (ACS2) from Solanum lycopersicum (Tomato).